Reading from the N-terminus, the 461-residue chain is Ufm1-specific protease 2 (461 aa).

Residues Cys294, Asp418, and His420 contribute to the active site.

This sequence belongs to the peptidase C78 family. Expressed at high level in brain, kidney, stomach, skeletal muscle, liver, pancreas, spleen and testis.

The protein resides in the endoplasmic reticulum. It is found in the cytoplasm. Its subcellular location is the nucleus. Functionally, thiol-dependent isopeptidase that specifically cleaves UFM1, a ubiquitin-like modifier protein, from conjugated proteins, such as CD274/PD-L1, CYB5R3, DDRGK1, MRE11, RPL26/uL24, TRIP4 and RPL26/uL24. While it is also able to mediate the processing of UFM1 precursors, a prerequisite for conjugation reactions, UFSP2 mainly acts as a protein deUFMylase that mediates deconjugation of UFM1 from target proteins. Mediates deUFMylation of RPL26/uL24, a critical step to release the UFM1 ribosome E3 ligase (UREL) complex during the recycling of 60S ribosome subunits from the endoplasmic reticulum. Catalyzes deUFMylation of TRIP4, regulating intracellular nuclear receptors transactivation and thereby regulate cell proliferation and differentiation. This is Ufm1-specific protease 2 from Mus musculus (Mouse).